We begin with the raw amino-acid sequence, 113 residues long: Phosphoribosyl-ATP pyrophosphatase (113 aa).

This sequence belongs to the PRA-PH family.

The protein resides in the cytoplasm. It catalyses the reaction 1-(5-phospho-beta-D-ribosyl)-ATP + H2O = 1-(5-phospho-beta-D-ribosyl)-5'-AMP + diphosphate + H(+). It functions in the pathway amino-acid biosynthesis; L-histidine biosynthesis; L-histidine from 5-phospho-alpha-D-ribose 1-diphosphate: step 2/9. This chain is Phosphoribosyl-ATP pyrophosphatase, found in Hydrogenovibrio crunogenus (strain DSM 25203 / XCL-2) (Thiomicrospira crunogena).